A 146-amino-acid polypeptide reads, in one-letter code: VHLTPDEKNAVCALWGKVNVEEVGGEALGRLLVVYPWTQRFFDSFGDLSSPSAVMGNPKVKAHGKKVLSAFSDGLQHLDNLCGTFAKLSELHCDKLHVNPENFRLLGNVLVCVLAHHFGKDFTPEVQAAYEKVVAGVATALAHKYH.

Val-1 carries the N-acetylvaline modification. Positions His-2 to His-146 constitute a Globin domain. A Phosphoserine modification is found at Ser-44. Position 59 is an N6-acetyllysine (Lys-59). Heme b is bound by residues His-63 and His-92. S-nitrosocysteine is present on Cys-93. Lys-144 is subject to N6-acetyllysine.

The protein belongs to the globin family. In terms of assembly, heterotetramer of two alpha chains and two beta chains. In terms of tissue distribution, red blood cells.

In terms of biological role, involved in oxygen transport from the lung to the various peripheral tissues. This is Hemoglobin subunit beta-1/2 (HBB) from Otolemur crassicaudatus (Brown greater galago).